The following is a 128-amino-acid chain: Organic solute transporter subunit beta (128 aa).

The Extracellular segment spans residues 1-30; it reads MDHSAEKAAANAEVPQELLEEMLWYFRAED. A helical transmembrane segment spans residues 31–53; that stretch reads AAPWNYSILVLAVLVVMTSMFLL. Residues 54–128 are Cytoplasmic-facing; it reads RRSILANRNR…FLPDPQETES (75 aa). Disordered stretches follow at residues 61 to 80 and 101 to 128; these read RNRK…HLDD and PDLA…ETES. Basic and acidic residues-rich tracts occupy residues 66-80 and 101-115; these read QPQD…HLDD and PDLA…EKDS. Ser-116 is subject to Phosphoserine.

This sequence belongs to the OST-beta family. In terms of assembly, interacts with SLC51A. The Ost-alpha/Ost-beta complex is a heterodimer composed of alpha (SLC51A) and beta (SLC51B) subunit; induces the transport of SLC51A from the endoplasmic reticulum to the plasma membrane. As to expression, present at high level in ileum. In ileum, it is restricted to the apical domain on the mature villus enterocytes with little detectable expression in the goblet cells or crypt enterocytes (at protein level). Expressed in kidney but not in heart, brain, liver, spleen, embryo, lung, thymus, ovary nor testis.

The protein localises to the cell membrane. It catalyses the reaction taurocholate(out) = taurocholate(in). The catalysed reaction is tauroursodeoxycholate(out) = tauroursodeoxycholate(in). It carries out the reaction glycoursodeoxycholate(out) = glycoursodeoxycholate(in). The enzyme catalyses glycocholate(out) = glycocholate(in). It catalyses the reaction taurochenodeoxycholate(out) = taurochenodeoxycholate(in). The catalysed reaction is glycochenodeoxycholate(out) = glycochenodeoxycholate(in). It carries out the reaction taurodeoxycholate(out) = taurodeoxycholate(in). The enzyme catalyses glycodeoxycholate(out) = glycodeoxycholate(in). It catalyses the reaction prostaglandin E2(out) = prostaglandin E2(in). The catalysed reaction is estrone 3-sulfate(out) = estrone 3-sulfate(in). It carries out the reaction dehydroepiandrosterone 3-sulfate(out) = dehydroepiandrosterone 3-sulfate(in). Functionally, essential component of the Ost-alpha/Ost-beta complex, a heterodimer that acts as the intestinal basolateral transporter responsible for bile acid export from enterocytes into portal blood. The Ost-alpha/Ost-beta complex efficiently transports the major species of bile acids (taurocholate). Taurine conjugates are transported more efficiently across the basolateral membrane than glycine-conjugated bile acids. Can also transport steroids such as estrone 3-sulfate and dehydroepiandrosterone 3-sulfate, therefore playing a role in the enterohepatic circulation of sterols. Able to transport eicosanoids such as prostaglandin E2. Modulates SLC51A glycosylation, membrane trafficking and stability activities. The sequence is that of Organic solute transporter subunit beta (Slc51b) from Mus musculus (Mouse).